Here is a 225-residue protein sequence, read N- to C-terminus: Enolase-phosphatase E1 (225 aa).

It belongs to the HAD-like hydrolase superfamily. MasA/MtnC family. As to quaternary structure, monomer. The cofactor is Mg(2+).

The catalysed reaction is 5-methylsulfanyl-2,3-dioxopentyl phosphate + H2O = 1,2-dihydroxy-5-(methylsulfanyl)pent-1-en-3-one + phosphate. The protein operates within amino-acid biosynthesis; L-methionine biosynthesis via salvage pathway; L-methionine from S-methyl-5-thio-alpha-D-ribose 1-phosphate: step 3/6. It functions in the pathway amino-acid biosynthesis; L-methionine biosynthesis via salvage pathway; L-methionine from S-methyl-5-thio-alpha-D-ribose 1-phosphate: step 4/6. Functionally, bifunctional enzyme that catalyzes the enolization of 2,3-diketo-5-methylthiopentyl-1-phosphate (DK-MTP-1-P) into the intermediate 2-hydroxy-3-keto-5-methylthiopentenyl-1-phosphate (HK-MTPenyl-1-P), which is then dephosphorylated to form the acireductone 1,2-dihydroxy-3-keto-5-methylthiopentene (DHK-MTPene). This Shewanella woodyi (strain ATCC 51908 / MS32) protein is Enolase-phosphatase E1.